An 89-amino-acid polypeptide reads, in one-letter code: Small ribosomal subunit protein uS15 (89 aa).

Belongs to the universal ribosomal protein uS15 family. Part of the 30S ribosomal subunit. Forms a bridge to the 50S subunit in the 70S ribosome, contacting the 23S rRNA.

One of the primary rRNA binding proteins, it binds directly to 16S rRNA where it helps nucleate assembly of the platform of the 30S subunit by binding and bridging several RNA helices of the 16S rRNA. In terms of biological role, forms an intersubunit bridge (bridge B4) with the 23S rRNA of the 50S subunit in the ribosome. The chain is Small ribosomal subunit protein uS15 from Alcanivorax borkumensis (strain ATCC 700651 / DSM 11573 / NCIMB 13689 / SK2).